The sequence spans 917 residues: DNA mismatch repair protein spellchecker 1 (917 aa).

Residue 667–674 (GPNMGGKS) coordinates ATP.

It belongs to the DNA mismatch repair MutS family. Heterodimer of Msh2/Spel and Msh6.

Its subcellular location is the nucleus. Functionally, involved in postreplication mismatch repair. Binds specifically to DNA containing mismatched nucleotides thus providing a target for the excision repair processes characteristic of postreplication mismatch repair. The sequence is that of DNA mismatch repair protein spellchecker 1 (spel1) from Drosophila melanogaster (Fruit fly).